A 204-amino-acid polypeptide reads, in one-letter code: Ribonuclease HII (204 aa).

In terms of domain architecture, RNase H type-2 spans Val-14–Leu-203. Asp-20, Glu-21, and Asp-112 together coordinate a divalent metal cation.

Belongs to the RNase HII family. Mn(2+) is required as a cofactor. The cofactor is Mg(2+).

It localises to the cytoplasm. The enzyme catalyses Endonucleolytic cleavage to 5'-phosphomonoester.. Functionally, endonuclease that specifically degrades the RNA of RNA-DNA hybrids. This is Ribonuclease HII from Thiobacillus denitrificans (strain ATCC 25259 / T1).